The following is a 281-amino-acid chain: Digeranylgeranylglyceryl phosphate synthase (281 aa).

7 helical membrane passes run 14-34 (AMAA…LSSA), 38-58 (VSLS…VTGA), 95-115 (LFLF…CGII), 149-169 (FLFG…VLFL), 207-227 (ASYI…VPYL), 235-255 (YLFV…QILG), and 259-279 (AARS…SFIV).

It belongs to the UbiA prenyltransferase family. DGGGP synthase subfamily. Mg(2+) serves as cofactor.

The protein localises to the cell membrane. It catalyses the reaction sn-3-O-(geranylgeranyl)glycerol 1-phosphate + (2E,6E,10E)-geranylgeranyl diphosphate = 2,3-bis-O-(geranylgeranyl)-sn-glycerol 1-phosphate + diphosphate. It participates in membrane lipid metabolism; glycerophospholipid metabolism. Prenyltransferase that catalyzes the transfer of the geranylgeranyl moiety of geranylgeranyl diphosphate (GGPP) to the C2 hydroxyl of (S)-3-O-geranylgeranylglyceryl phosphate (GGGP). This reaction is the second ether-bond-formation step in the biosynthesis of archaeal membrane lipids. This chain is Digeranylgeranylglyceryl phosphate synthase, found in Methanococcoides burtonii (strain DSM 6242 / NBRC 107633 / OCM 468 / ACE-M).